Reading from the N-terminus, the 450-residue chain is Chromosomal replication initiator protein DnaA (450 aa).

A domain I, interacts with DnaA modulators region spans residues 1–79 (MKDSYFDLNT…MEYAYDVAHD (79 aa)). A domain II region spans residues 79 to 112 (DFFKPELKVIKVVANPVNNQKSNQSNSDFVATDY). The interval 113-329 (QLNQNFTFDT…GAFNTLTLMA (217 aa)) is domain III, AAA+ region. Residues G157, G159, K160, and T161 each coordinate ATP. Residues 330-450 (RAGRPINVSN…NLSTKIKEKS (121 aa)) form a domain IV, binds dsDNA region.

It belongs to the DnaA family. In terms of assembly, oligomerizes as a right-handed, spiral filament on DNA at oriC.

It localises to the cytoplasm. Functionally, plays an essential role in the initiation and regulation of chromosomal replication. ATP-DnaA binds to the origin of replication (oriC) to initiate formation of the DNA replication initiation complex once per cell cycle. Binds the DnaA box (a 9 base pair repeat at the origin) and separates the double-stranded (ds)DNA. Forms a right-handed helical filament on oriC DNA; dsDNA binds to the exterior of the filament while single-stranded (ss)DNA is stabiized in the filament's interior. The ATP-DnaA-oriC complex binds and stabilizes one strand of the AT-rich DNA unwinding element (DUE), permitting loading of DNA polymerase. After initiation quickly degrades to an ADP-DnaA complex that is not apt for DNA replication. Binds acidic phospholipids. The protein is Chromosomal replication initiator protein DnaA of Oenococcus oeni (strain ATCC BAA-331 / PSU-1).